The chain runs to 304 residues: Probable casein kinase I homolog ECU03_0910 (304 aa).

One can recognise a Protein kinase domain in the interval 8–304 (IKLVQKIASG…SDSMGDLEIL (297 aa)). Residues 14 to 22 (IASGAFGDI) and lysine 37 each bind ATP. Aspartate 129 functions as the Proton acceptor in the catalytic mechanism.

This sequence belongs to the protein kinase superfamily. CK1 Ser/Thr protein kinase family. Casein kinase I subfamily.

It is found in the nucleus. It catalyses the reaction L-seryl-[protein] + ATP = O-phospho-L-seryl-[protein] + ADP + H(+). The enzyme catalyses L-threonyl-[protein] + ATP = O-phospho-L-threonyl-[protein] + ADP + H(+). Its function is as follows. Involved in DNA repair. May regulate the activity of protein(s) involved in double strand break repair caused by gamma rays. The protein is Probable casein kinase I homolog ECU03_0910 of Encephalitozoon cuniculi (strain GB-M1) (Microsporidian parasite).